The chain runs to 520 residues: Cysteine--tRNA ligase (520 aa).

Position 29 (Cys29) interacts with Zn(2+). Residues 31–41 (PTVYNYPHLGN) carry the 'HIGH' region motif. Zn(2+) is bound by residues Cys227, His252, and Glu256. The short motif at 301-305 (KMSKS) is the 'KMSKS' region element. Position 304 (Lys304) interacts with ATP.

It belongs to the class-I aminoacyl-tRNA synthetase family. As to quaternary structure, monomer. The cofactor is Zn(2+).

Its subcellular location is the cytoplasm. The catalysed reaction is tRNA(Cys) + L-cysteine + ATP = L-cysteinyl-tRNA(Cys) + AMP + diphosphate. The sequence is that of Cysteine--tRNA ligase (cysS) from Treponema pallidum (strain Nichols).